A 68-amino-acid polypeptide reads, in one-letter code: Large ribosomal subunit protein uL29 (68 aa).

This sequence belongs to the universal ribosomal protein uL29 family.

The chain is Large ribosomal subunit protein uL29 from Nitrobacter winogradskyi (strain ATCC 25391 / DSM 10237 / CIP 104748 / NCIMB 11846 / Nb-255).